Consider the following 148-residue polypeptide: MTKTVYVLNGPNLNLLGTREPQVYGSQTLADVEQLCTAACARHGLALVFRQSNHEGALVDWIHEAGRLHAAGQLAGVVLNAAAYTHTSVALLDAVKGTGVPVVELHISNVHARESFRHHSYLAGAARAVMCGFGVQGYALAIDGLAQW.

Tyr-24 acts as the Proton acceptor in catalysis. Residues Asn-80, His-86, and Asp-93 each contribute to the substrate site. His-106 serves as the catalytic Proton donor. Substrate-binding positions include 107 to 108 and Arg-117; that span reads IS.

This sequence belongs to the type-II 3-dehydroquinase family. In terms of assembly, homododecamer.

The enzyme catalyses 3-dehydroquinate = 3-dehydroshikimate + H2O. It functions in the pathway metabolic intermediate biosynthesis; chorismate biosynthesis; chorismate from D-erythrose 4-phosphate and phosphoenolpyruvate: step 3/7. In terms of biological role, catalyzes a trans-dehydration via an enolate intermediate. In Acidovorax sp. (strain JS42), this protein is 3-dehydroquinate dehydratase.